The chain runs to 278 residues: Dermonecrotic toxin LspiSicTox-betaIE2ii (278 aa).

The active site involves H5. The Mg(2+) site is built by E25 and D27. H41 (nucleophile) is an active-site residue. Intrachain disulfides connect C45-C51 and C47-C190. Position 85 (D85) interacts with Mg(2+).

The protein belongs to the arthropod phospholipase D family. Class II subfamily. The cofactor is Mg(2+). In terms of tissue distribution, expressed by the venom gland.

The protein resides in the secreted. The catalysed reaction is an N-(acyl)-sphingosylphosphocholine = an N-(acyl)-sphingosyl-1,3-cyclic phosphate + choline. The enzyme catalyses an N-(acyl)-sphingosylphosphoethanolamine = an N-(acyl)-sphingosyl-1,3-cyclic phosphate + ethanolamine. It catalyses the reaction a 1-acyl-sn-glycero-3-phosphocholine = a 1-acyl-sn-glycero-2,3-cyclic phosphate + choline. It carries out the reaction a 1-acyl-sn-glycero-3-phosphoethanolamine = a 1-acyl-sn-glycero-2,3-cyclic phosphate + ethanolamine. Dermonecrotic toxins cleave the phosphodiester linkage between the phosphate and headgroup of certain phospholipids (sphingolipid and lysolipid substrates), forming an alcohol (often choline) and a cyclic phosphate. This toxin acts on sphingomyelin (SM). It may also act on ceramide phosphoethanolamine (CPE), lysophosphatidylcholine (LPC) and lysophosphatidylethanolamine (LPE), but not on lysophosphatidylserine (LPS), and lysophosphatidylglycerol (LPG). It acts by transphosphatidylation, releasing exclusively cyclic phosphate products as second products. Induces dermonecrosis, hemolysis, increased vascular permeability, edema, inflammatory response, and platelet aggregation. The sequence is that of Dermonecrotic toxin LspiSicTox-betaIE2ii from Loxosceles spinulosa (Recluse spider).